Consider the following 185-residue polypeptide: Hypoxanthine/guanine phosphoribosyltransferase (185 aa).

The protein belongs to the purine/pyrimidine phosphoribosyltransferase family. Archaeal HPRT subfamily. Homodimer.

The protein localises to the cytoplasm. The catalysed reaction is IMP + diphosphate = hypoxanthine + 5-phospho-alpha-D-ribose 1-diphosphate. It catalyses the reaction GMP + diphosphate = guanine + 5-phospho-alpha-D-ribose 1-diphosphate. It participates in purine metabolism; IMP biosynthesis via salvage pathway; IMP from hypoxanthine: step 1/1. Functionally, catalyzes a salvage reaction resulting in the formation of IMP that is energically less costly than de novo synthesis. The chain is Hypoxanthine/guanine phosphoribosyltransferase (hpt) from Methanococcus maripaludis (strain DSM 14266 / JCM 13030 / NBRC 101832 / S2 / LL).